Here is a 462-residue protein sequence, read N- to C-terminus: Protoheme IX farnesyltransferase, mitochondrial (462 aa).

The N-terminal 30 residues, 1–30 (MSYFPRTYAHLMRNVLAHNKGNIYLQIGTQ), are a transit peptide targeting the mitochondrion. Transmembrane regions (helical) follow at residues 158–178 (TILV…PASV), 234–254 (LIGT…VAIL), 274–294 (IINT…GWAA), 298–318 (LSHP…FPHF), 352–372 (YSIL…TDWY), 373–393 (YQID…KFYW), and 425–445 (FMAS…HKKG).

It belongs to the UbiA prenyltransferase family. In terms of assembly, forms ~370 kDa homooligomeric complexes.

It localises to the mitochondrion. It is found in the mitochondrion membrane. The catalysed reaction is heme b + (2E,6E)-farnesyl diphosphate + H2O = Fe(II)-heme o + diphosphate. It participates in porphyrin-containing compound metabolism; heme O biosynthesis; heme O from protoheme: step 1/1. With respect to regulation, positively regulated by the hydroxylated intermediate (heme I) formed at the subsequent step, or by HAS/COX15 itself. In terms of biological role, catalyzes the first reaction in the biosynthesis of heme A, a prosthetic group of mitochondrial cytochrome c oxidase (CcO). Heme A is synthesized from heme B by two sequential enzymatic reactions catalyzed by heme O synthase (HOS/COX10) and heme A synthase (HAS/COX15). HOS converts heme B (protoheme IX) to heme O by substitution of the vinyl group on carbon 2 of heme B porphyrin ring with a hydroxyethyl farnesyl side group. This Saccharomyces cerevisiae (strain ATCC 204508 / S288c) (Baker's yeast) protein is Protoheme IX farnesyltransferase, mitochondrial (COX10).